The chain runs to 283 residues: MELLDGRALANELTHAQQTAVETLKEQGVTPKLVVIMVGDDPASAIYTQSKQKRATKIGMASELKRLSAETTEAELLALVKTLNDDRTVDGILVQLPLPKQINEDHVIQAIDAKKDVDGFSPVNIGQLWLNQPGLVACTPNGIMRLLAAHKIDVAGKNVVIVGRSNIVGRPLAALMLNANATVTIAHSRTANLKALTKTADILVAAIGKPHFFGIDAVKEGAVVIDVGINRLEDGSVTGDVDFEALQTHVSAMTPVPRGVGPMTITMLMEQTIEIAKERVKRG.

NADP(+) contacts are provided by residues 163–165 (GRS), S188, and I229.

It belongs to the tetrahydrofolate dehydrogenase/cyclohydrolase family. In terms of assembly, homodimer.

The enzyme catalyses (6R)-5,10-methylene-5,6,7,8-tetrahydrofolate + NADP(+) = (6R)-5,10-methenyltetrahydrofolate + NADPH. It catalyses the reaction (6R)-5,10-methenyltetrahydrofolate + H2O = (6R)-10-formyltetrahydrofolate + H(+). It functions in the pathway one-carbon metabolism; tetrahydrofolate interconversion. Its function is as follows. Catalyzes the oxidation of 5,10-methylenetetrahydrofolate to 5,10-methenyltetrahydrofolate and then the hydrolysis of 5,10-methenyltetrahydrofolate to 10-formyltetrahydrofolate. The chain is Bifunctional protein FolD from Latilactobacillus sakei subsp. sakei (strain 23K) (Lactobacillus sakei subsp. sakei).